Consider the following 409-residue polypeptide: Chaetoglobosin A biosynthesis cluster protein C (409 aa).

One can recognise an HTH CENPB-type domain in the interval 51–120 (DLPANSRKLT…VKRQPQLRTR (70 aa)). Positions 84–113 (RGVEDMANHLLRERDAPPVGKLWAHNFVKR) form a DNA-binding region, H-T-H motif. Disordered regions lie at residues 243-269 (PTHPDSRPGTAQPWASKTPYNAQETRS) and 320-350 (ANEPLSKRRKAKRTRIQLGGPLTVQDAQDPL). The span at 255 to 269 (PWASKTPYNAQETRS) shows a compositional bias: polar residues.

Its subcellular location is the nucleus. Functionally, part of the gene cluster that mediates the biosynthesis of chaetoglobosin A which has a unique inhibitory activity against actin polymerization in mammalian cells. Chaetoglobosin A and its intermediates are involved in the morphological differentiation of C.globosum. The first step of the pathway is the synthesis of prochaetoglobosin I via condensation of one acetyl-CoA, 8 malonyl-CoA, and a L-tryptophan molecule by the PKS-NRPS hybrid synthetase cheA, followed by reduction of backbone double bond to install desired geometry by the enoyl reductase cheB. Further multiple oxidation steps performed by the cytochrome P450 monooxygenases cheE and cheG, as well as by the FAD-linked oxidoreductase cheF, lead to the formation of chaetoglobosin A. Depending on the order of action of these reductases, distinct intermediates can be identified. Within the pathway, the cytochrome P450 monooxygenase cheE catalyzes a stereospecific epoxidation on prochaetoglobosin I, cytoglobosin D, and chaetoglobosin J intermediates. The FAD-linked oxidoreductase cheF performs dehydrogenation of the C-20 hydroxyl groups in the 20-dihyrochaetoglobosin A and cytoglobosin D intermediates. Finally, the cytochrome P450 monooxygenase cheG can catalyze the stereospecific dihydroxylation of prochaetoglobosin I and prochaetoglobosin IV at C-19 and C-20, respectively. The Diels-Alderase cheD may play a role in the post-PKS-NRPS biosynthetic steps catalyzing Diels-Alder cyclization. The chain is Chaetoglobosin A biosynthesis cluster protein C from Chaetomium globosum (strain ATCC 6205 / CBS 148.51 / DSM 1962 / NBRC 6347 / NRRL 1970) (Soil fungus).